We begin with the raw amino-acid sequence, 248 residues long: Chitin deacetylase (248 aa).

An N-terminal signal peptide occupies residues 1–26; that stretch reads MHFSTLFGAAATAALAGSTNASPLAR. 2 disulfides stabilise this stretch: cysteine 38–cysteine 237 and cysteine 148–cysteine 152. A NodB homology domain is found at 42–232; sequence GLVALTYDDG…TLKSKGYRAV (191 aa). The active-site Proton acceptor is the aspartate 49. Aspartate 49 contacts acetate. Co(2+) contacts are provided by aspartate 50, histidine 104, and histidine 108. Residue tyrosine 145 coordinates acetate. Histidine 206 functions as the Proton donor in the catalytic mechanism.

It belongs to the polysaccharide deacetylase family. In terms of assembly, monomer. Co(2+) serves as cofactor. N-glycosylated.

Its subcellular location is the secreted. The catalysed reaction is [(1-&gt;4)-N-acetyl-beta-D-glucosaminyl](n) + n H2O = chitosan + n acetate. Its function is as follows. Hydrolyzes the N-acetamido groups of N-acetyl-D-glucosamine polymers in chitin to form chitosan and acetate. May play a role in evasion of the host immune response; plant chitinases liberate chitin molecules from the fungal cell wall which act as elicitors of the plant immune response, deacetylation of the liberated chitin neutralizes elicitor activity. This chain is Chitin deacetylase, found in Colletotrichum lindemuthianum (Bean anthracnose fungus).